We begin with the raw amino-acid sequence, 1274 residues long: Paired amphipathic helix protein Sin3a (1274 aa).

Disordered regions lie at residues 1–26 and 85–110; these read MKRR…STEA and HHHP…PPVA. Phosphoserine is present on S10. Residues 119–189 enclose the PAH 1 domain; sequence QRLKVEDALS…MGFNTFLPPG (71 aa). The tract at residues 119-196 is interaction with HCFC1; the sequence is QRLKVEDALS…PPGYKIEVQT (78 aa). Residues K122 and K134 each participate in a glycyl lysine isopeptide (Lys-Gly) (interchain with G-Cter in SUMO2) cross-link. The disordered stretch occupies residues 205–297; sequence PGQVHQIPTH…ISLGTAPSLQ (93 aa). Positions 205 to 479 are interaction with REST; sequence PGQVHQIPTH…KVRKALRSAE (275 aa). A compositionally biased stretch (low complexity) spans 228–237; that stretch reads SQPSSQSAPT. Residues 252–266 are compositionally biased toward polar residues; that stretch reads KPSQLQAHTPASQQT. Pro residues predominate over residues 267-282; it reads PPLPPYASPRSPPVQP. S277 is subject to Phosphoserine. Position 284 is a phosphothreonine (T284). Over residues 284-297 the composition is skewed to polar residues; sequence TPVTISLGTAPSLQ. The 84-residue stretch at 300 to 383 folds into the PAH 2 domain; that stretch reads QPVEFNHAIN…SEFGQFLPDA (84 aa). Positions 398–443 are disordered; sequence DSVRNDHGGTVKKPQLNNKPQRPSQNGCQIRRHSGTGATPPVKKKP. The span at 412–425 shows a compositional bias: polar residues; it reads QLNNKPQRPSQNGC. The 70-residue stretch at 457 to 526 folds into the PAH 3 domain; sequence SKHGVGTESL…NWFKNFLGYK (70 aa). The tract at residues 459–526 is interaction with SAP30; sequence HGVGTESLFF…NWFKNFLGYK (68 aa). N6-acetyllysine is present on K470. The tract at residues 524–851 is interaction with NCOR1; sequence GYKESVHLES…EMDVDEATGA (328 aa). The interactions with SUDS3 and SAP130 stretch occupies residues 525 to 660; the sequence is YKESVHLESF…KFRLDNTLGG (136 aa). K564 participates in a covalent cross-link: Glycyl lysine isopeptide (Lys-Gly) (interchain with G-Cter in SUMO2). Residues 688–830 are interactions with HDAC1 and ARID4B; that stretch reads NPSIAVPIVL…IPDLLFAQRG (143 aa). S833 carries the post-translational modification Phosphoserine. A compositionally biased stretch (acidic residues) spans 835–847; it reads VEEEEEEEMDVDE. Residues 835 to 865 are disordered; the sequence is VEEEEEEEMDVDEATGAPKKHNGVGGSPPKS. A Phosphoserine modification is found at S861. K866 and K876 each carry N6-acetyllysine. Residues 889–968 form an interaction with OGT region; that stretch reads VNNNWYIFMR…YYPAFLDMVR (80 aa). Residues 904 to 933 are a coiled coil; it reads CLRLLRICSQAERQIEEENREREWEREVLG. 3 positions are modified to phosphoserine: S941, S1090, and S1113. The segment at 1137 to 1157 is disordered; the sequence is CQRGREQQEKEGKEGNSKKTM. Basic and acidic residues predominate over residues 1139–1157; that stretch reads RGREQQEKEGKEGNSKKTM.

In terms of assembly, interacts with ARID4B, BRMS1L, HCFC1, HDAC1, HDAC2, MXI1, SAP30L, SAP130, SFPQ and TOPORS. Interacts with OGT (via TPRs 1-6); the interaction mediates transcriptional repression in parallel with histone deacetylase. Interacts with BAZ2A, MXD1, MXD3, MXD4, MBD2, DACH1, NCOR1, NR4A2, REST, RLIM, SAP30, SETDB1, SMYD2, and SUDS3. Interacts with PHF12 in a complex composed of HDAC1, PHF12 and SAP30. Interacts with TET1; the interaction recruits SIN3A to gene promoters. The large PER complex involved in the histone deacetylation is composed of at least HDAC1, PER2, SFPQ and SIN3A. Interacts with KLF11. Interacts with PPHLN1. Found in a complex with YY1, GON4L and HDAC1. Interacts (via PAH2) with FOXK1. Interacts with FOXK2. Found in a complex composed of at least SINHCAF, SIN3A, HDAC1, SAP30, RBBP4, OGT and TET1. Interacts with SINHCAF. Interacts with SPHK2. SUMO1 sumoylated by TOPORS. Probably desumoylated by SENP2. In terms of tissue distribution, widely expressed. Highest levels in testis, lung and thymus. Expressed at relatively high levels throughout brain development. In adult mice, expression is high in neurogenic regions such as the subventricular zone, rostral migratory stream, olfactory bulb and dentate gyrus.

It localises to the nucleus. The protein localises to the nucleolus. Its function is as follows. Acts as a transcriptional repressor. Corepressor for REST. Interacts with MXI1 to repress MYC responsive genes and antagonize MYC oncogenic activities. Also interacts with MXD1-MAX heterodimers to repress transcription by tethering SIN3A to DNA. Acts cooperatively with OGT to repress transcription in parallel with histone deacetylation. Involved in the control of the circadian rhythms. Required for the transcriptional repression of circadian target genes, such as PER1, mediated by the large PER complex through histone deacetylation. Cooperates with FOXK1 to regulate cell cycle progression probably by repressing cell cycle inhibitor genes expression. Required for cortical neuron differentiation and callosal axon elongation. This is Paired amphipathic helix protein Sin3a (Sin3a) from Mus musculus (Mouse).